A 32-amino-acid chain; its full sequence is Calcitonin (32 aa).

Cys1 and Cys7 are oxidised to a cystine. Pro32 is modified (proline amide).

The protein belongs to the calcitonin family.

It is found in the secreted. Its function is as follows. Causes a rapid but short-lived drop in the level of calcium and phosphate in blood by promoting the incorporation of those ions in the bones. This chain is Calcitonin, found in Anguilla japonica (Japanese eel).